A 186-amino-acid chain; its full sequence is UPF0397 protein SGO_0469 (186 aa).

The next 5 membrane-spanning stretches (helical) occupy residues 14-34 (VVAT…SIPT), 50-70 (LFGV…GHAL), 77-97 (GNPW…VGLL), 119-139 (AQFV…DILI), and 152-172 (VVAT…LLIA).

The protein belongs to the UPF0397 family.

It localises to the cell membrane. This is UPF0397 protein SGO_0469 from Streptococcus gordonii (strain Challis / ATCC 35105 / BCRC 15272 / CH1 / DL1 / V288).